The sequence spans 136 residues: Cytochrome c oxidase subunit 13, mitochondrial (136 aa).

The N-terminal 29 residues, 1-29, are a transit peptide targeting the mitochondrion; it reads MFAQRQMFFARLAANLRAPAVRQTVQRRF. Over 30–62 the chain is Mitochondrial matrix; it reads ASTPANESGKNAFVREREAVKQHAAETTELWRK. Residues 63–83 form a helical membrane-spanning segment; the sequence is ISLYGIPPALALAGYNAYTLY. The Mitochondrial intermembrane portion of the chain corresponds to 84–136; it reads NEHWEHWSHLPPLEERTEYPYQNIRTRNYPWGDGDKTLFWNESVNYHNRDKVT.

This sequence belongs to the cytochrome c oxidase subunit 6A family. Component of the cytochrome c oxidase (complex IV, CIV), a multisubunit enzyme composed of 11 subunits. The complex is composed of a catalytic core of 3 subunits Cox1, Cox2 and Cox3, encoded in the mitochondrial DNA, and 8 supernumerary subunits Cox4, Cox5a/Cox5, Cox6, Cox7, Cox8, Cox7a/Cox9, Cox6b/Cox12 and Cox6a/Cox13, which are encoded in the nuclear genome. The complex exists as a monomer or a dimer and forms respiratory supercomplexes (SCs) in the inner mitochondrial membrane with NADH-ubiquinone oxidoreductase (complex I, CI) and ubiquinol-cytochrome c oxidoreductase (cytochrome b-c1 complex, complex III, CIII), resulting in various different assemblies (supercomplexes I(1)IV(1), I(1)III(3)IV(2), III(2)IV(1) and III(2)IV(2) as well as larger supercomplexes of compositions like I(1)III(2)IV(5-6)). Cox6a/Cox13 was not present in the cryo-EM structure. It may be involved in complex IV dimer formation and might not be always expressed. This would explain its absence in the map of the isolated monomer.

It localises to the mitochondrion inner membrane. It participates in energy metabolism; oxidative phosphorylation. Component of the cytochrome c oxidase, the last enzyme in the mitochondrial electron transport chain which drives oxidative phosphorylation. The respiratory chain contains 3 multisubunit complexes succinate dehydrogenase (complex II, CII), ubiquinol-cytochrome c oxidoreductase (cytochrome b-c1 complex, complex III, CIII) and cytochrome c oxidase (complex IV, CIV), that cooperate to transfer electrons derived from NADH and succinate to molecular oxygen, creating an electrochemical gradient over the inner membrane that drives transmembrane transport and the ATP synthase. Cytochrome c oxidase is the component of the respiratory chain that catalyzes the reduction of oxygen to water. Electrons originating from reduced cytochrome c in the intermembrane space (IMS) are transferred via the dinuclear copper A center (CU(A)) of Cox2 and heme A of Cox1 to the active site in Cox1, a binuclear center (BNC) formed by heme A3 and copper B (CU(B)). The BNC reduces molecular oxygen to 2 water molecules using 4 electrons from cytochrome c in the IMS and 4 protons from the mitochondrial matrix. The protein is Cytochrome c oxidase subunit 13, mitochondrial (eat-5) of Neurospora crassa (strain ATCC 24698 / 74-OR23-1A / CBS 708.71 / DSM 1257 / FGSC 987).